A 609-amino-acid polypeptide reads, in one-letter code: WD repeat-containing protein 1 (609 aa).

WD repeat units follow at residues 6–47 (EIKK…IRNI), 50–89 (PAIA…IWDT), 95–137 (LLKY…LWDS), 140–178 (SVGE…FFEG), 182–220 (KFKF…IYDG), 226–265 (VCAL…IWDV), 272–308 (STFN…YLDK), 313–353 (KPLR…YWDS), 360–410 (GFSG…KMDV), 434–476 (MKDK…LYSI), 482–520 (KSDD…VFSV), 525–563 (VEHN…VWTV), and 568–606 (TRIK…EWSI).

The protein belongs to the WD repeat AIP1 family.

The protein localises to the cytoplasm. It is found in the cytoskeleton. In terms of biological role, induces disassembly of actin filaments in conjunction with ADF/cofilin family proteins. Enhances cofilin-mediated actin severing. This Gallus gallus (Chicken) protein is WD repeat-containing protein 1 (WDR1).